A 1114-amino-acid chain; its full sequence is Zinc finger E-box-binding homeobox 1 (1114 aa).

2 disordered regions span residues 1-105 and 142-163; these read MADG…EVGC and APEE…NGTP. The segment covering 15-30 has biased composition (low complexity); it reads PRRNNVTNYNNVIEAN. Residues 149-160 are compositionally biased toward polar residues; the sequence is QGTPEASGQDEN. C2H2-type zinc fingers lie at residues 170-193, 200-222, and 240-262; these read LTCP…KYRH, FSCS…MTSH, and FKCT…LRIH. Residues 268–292 form a C2H2-type 4; atypical zinc finger; sequence YECPNCKKRFSHSGSYSSHISSKKC. Disordered regions lie at residues 304–326, 491–529, 553–588, and 636–716; these read SGLK…PARP, NLKK…TNDS, KNPP…GQPP, and QISV…SRNS. A compositionally biased stretch (low complexity) spans 309–326; the sequence is SQCSSPSLSASPGSPARP. The span at 504–523 shows a compositional bias: basic and acidic residues; that stretch reads KNEKLPEDLTVKSEKDKNFE. Composition is skewed to polar residues over residues 573 to 584 and 636 to 681; these read APSETGENNLSP and QISV…QNPA. A DNA-binding region (homeobox; atypical) is located at residues 581-640; it reads NLSPGQPPLKNLLSLLKAYYALNAQPSAEELSKIADSVNLPLDVVKKWFEKMQAGQISVQ. A compositionally biased stretch (low complexity) spans 682–716; that stretch reads NTSKSQTSSGGSTQNGSRSSTPSPSPLNLSSSRNS. The CTBP-binding motif signature appears at 767 to 771; sequence PLNLT. 2 stretches are compositionally biased toward polar residues: residues 852–866 and 874–890; these read AVQE…ANGS and SSEG…SDST. The segment at 852-898 is disordered; that stretch reads AVQETPPKQTQANGSQDERQDTSSEGVSNVEDQNDSDSTPPKKKMRK. 2 consecutive C2H2-type zinc fingers follow at residues 904-926 and 932-954; these read YACD…KYEH and HECG…MRLH. Residues 960–981 form a C2H2-type 7; atypical zinc finger; the sequence is YQCDKCGKRFSHSGSYSQHMNH. The segment at 989–1114 is disordered; that stretch reads EAEERDSTEQ…QVSEEKTNKA (126 aa). The segment covering 1031 to 1047 has biased composition (acidic residues); it reads EEEEDSEKEEEEEEEKD. Residues 1048–1062 are compositionally biased toward basic and acidic residues; sequence VEGLQEEKECRKLQD. Positions 1063 to 1078 are enriched in acidic residues; sequence VEEEEEVEEEEEEEEG. Residues 1079-1089 are compositionally biased toward basic and acidic residues; the sequence is KTEGNKNDDVV.

It belongs to the delta-EF1/ZFH-1 C2H2-type zinc-finger family. In terms of tissue distribution, expression is developmentally regulated with high expression in mesoderm, nervous system and lens.

It is found in the nucleus. Functionally, acts as a transcriptional repressor. Positively regulates neuronal differentiation. Represses transcription by binding to the E box-containing promoter. Binds to delta 1-crystallin enhancer core and represses lens-specific transcription. It also binds many other non-lens specific DNA sequences. This chain is Zinc finger E-box-binding homeobox 1 (ZEB1), found in Gallus gallus (Chicken).